The following is a 1299-amino-acid chain: MSLQEMFRFPMGLLLGSVLLVASAPATLEPPGCSNKEQQVTVSHTYKIDVPKSALVQVDADPQPLSDDGASLLALGEAREEQNIIFRHNIRLQTPQKDCELAGSVQDLLARVKKLEEEMVEMKEQCSAQRCCQGVTDLSRHCSGHGTFSLETCSCHCEEGREGPACERLACPGACSGHGRCVDGRCLCHEPYVGADCGYPACPENCSGHGECVRGVCQCHEDFMSEDCSEKRCPGDCSGHGFCDTGECYCEEGFTGLDCAQVVTPQGLQLLKNTEDSLLVSWEPSSQVDHYLLSYYPLGKELSGKQIQVPKEQHSYEILGLLPGTKYIVTLRNVKNEVSSSPQHLLATTDLAVLGTAWVTDETENSLDVEWENPSTEVDYYKLRYGPMTGQEVAEVTVPKSSDPKSRYDITGLHPGTEYKITVVPMRGELEGKPILLNGRTEIDSPTNVVTDRVTEDTATVSWDPVQAVIDKYVVRYTSADGDTKEMAVHKDESSTVLTGLKPGEAYKVYVWAERGNQGSKKADTNALTEIDSPANLVTDRVTENTATISWDPVQATIDKYVVRYTSADDQETREVLVGKEQSSTVLTGLRPGVEYTVHVWAQKGDRESKKADTNAPTDIDSPKNLVTDRVTENMATVSWDPVQAAIDKYVVRYTSAGGETREVPVGKEQSSTVLTGLRPGMEYMVHVWAQKGDQESKKADTKAQTDIDSPQNLVTDRVTENMATVSWDPVRATIDRYVVRYTSAKDGETREVPVGKEQSSTVLTGLRPGVEYTVHVWAQKGAQESKKADTKAQTDIDSPQNLVTDWVTENTATVSWDPVQATIDRYVVHYTSANGETREVPVGKEQSSTVLTGLRPGMEYTVHVWAQKGNQESKKADTKAQTEIDGPKNLVTDWVTENMATVSWDPVQATIDKYMVRYTSADGETREVPVGKEHSSTVLTGLRPGMEYMVHVWAQKGAQESKKADTKAQTELDPPRNLRPSAVTQSGGILTWTPPSAQIHGYILTYQFPDGTVKEMQLGREDQRFALQGLEQGATYPVSLVAFKGGRRSRNVSTTLSTVGARFPHPSDCSQVQQNSNAASGLYTIYLHGDASRPLQVYCDMETDGGGWIVFQRRNTGQLDFFKRWRSYVEGFGDPMKEFWLGLDKLHNLTTGTPARYEVRVDLQTANESAYAIYDFFQVASSKERYKLTVGKYRGTAGDALTYHNGWKFTTFDRDNDIALSNCALTHHGGWWYKNCHLANPNGRYGETKHSEGVNWEPWKGHEFSIPYVELKIRPHGYSREPVLGRKKRTLRGRLRTF.

The signal sequence occupies residues 1 to 28 (MSLQEMFRFPMGLLLGSVLLVASAPATL). 3 EGF-like domains span residues 167–198 (ERLA…ADCG), 199–229 (YPAC…EDCS), and 230–260 (EKRC…LDCA). 9 disulfide bridges follow: C171/C181, C175/C186, C188/C197, C202/C212, C206/C217, C219/C228, C233/C243, C237/C248, and C250/C259. Fibronectin type-III domains are found at residues 264–352 (TPQG…TDLA), 353–444 (VLGT…TEID), 445–532 (SPTN…TEID), 533–623 (SPAN…IDSP), 624–709 (KNLV…TDID), 710–800 (SPQN…IDSP), 801–886 (QNLV…TEID), 887–976 (GPKN…LDPP), and 977–1063 (RNLR…VGAR). The segment at 605–624 (GDRESKKADTNAPTDIDSPK) is disordered. Basic and acidic residues predominate over residues 960-977 (QESKKADTKAQTELDPPR). Residues 960–982 (QESKKADTKAQTELDPPRNLRPS) are disordered. Positions 1061 to 1278 (GARFPHPSDC…YVELKIRPHG (218 aa)) constitute a Fibrinogen C-terminal domain. The N-linked (GlcNAc...) asparagine glycan is linked to N1149.

This sequence belongs to the tenascin family. As to quaternary structure, homohexamer. Not detected in normal adult mammary tissues or brain but expressed in most breast tumors and brain tumors, such as glioblastomas, astrocytomas and oligodendrogliomas, tested. In brain tumors, detected around the endothelial cell layer of the clood vessels.

It is found in the secreted. The protein resides in the extracellular space. The protein localises to the extracellular matrix. Its function is as follows. Extracellular matrix protein that seems to be a ligand for ITGA8:ITGB1, ITGAV:ITGB1 and ITGA4:ITGB1. Involved in neurite outgrowth and cell migration in hippocampal explants. During endochondral bone formation, inhibits proliferation and differentiation of proteoblasts mediated by canonical WNT signaling. In tumors, stimulates angiogenesis by elongation, migration and sprouting of endothelial cells. Expressed in most mammary tumors, may facilitate tumorigenesis by supporting the migratory behavior of breast cancer cells. The protein is Tenascin-N of Homo sapiens (Human).